The following is a 198-amino-acid chain: Glycerol-3-phosphate acyltransferase (198 aa).

5 helical membrane passes run 10–30 (LIPILFASYLIGSIPFSWILV), 57–77 (GISFLVLLLDIFKSVLVILIL), 86–106 (IMYLTGFTVVLGHIFPVWFLF), 118–138 (VVLSINIKIFFLFIITWAVVF), and 160–180 (AVTENFNSSIFYIAMSIIVLI).

It belongs to the PlsY family. As to quaternary structure, probably interacts with PlsX.

It localises to the cell inner membrane. The catalysed reaction is an acyl phosphate + sn-glycerol 3-phosphate = a 1-acyl-sn-glycero-3-phosphate + phosphate. The protein operates within lipid metabolism; phospholipid metabolism. Functionally, catalyzes the transfer of an acyl group from acyl-phosphate (acyl-PO(4)) to glycerol-3-phosphate (G3P) to form lysophosphatidic acid (LPA). This enzyme utilizes acyl-phosphate as fatty acyl donor, but not acyl-CoA or acyl-ACP. This is Glycerol-3-phosphate acyltransferase from Anaplasma marginale (strain St. Maries).